Reading from the N-terminus, the 444-residue chain is Na(+)-translocating NADH-quinone reductase subunit A (444 aa).

It belongs to the NqrA family. Composed of six subunits; NqrA, NqrB, NqrC, NqrD, NqrE and NqrF.

The enzyme catalyses a ubiquinone + n Na(+)(in) + NADH + H(+) = a ubiquinol + n Na(+)(out) + NAD(+). Its function is as follows. NQR complex catalyzes the reduction of ubiquinone-1 to ubiquinol by two successive reactions, coupled with the transport of Na(+) ions from the cytoplasm to the periplasm. NqrA to NqrE are probably involved in the second step, the conversion of ubisemiquinone to ubiquinol. The sequence is that of Na(+)-translocating NADH-quinone reductase subunit A from Shewanella amazonensis (strain ATCC BAA-1098 / SB2B).